Here is a 319-residue protein sequence, read N- to C-terminus: Alpha-hemolysin (319 aa).

The N-terminal stretch at 1–26 is a signal peptide; the sequence is MKTRIVSSVTTTLLLGSILMNPVAGA.

Belongs to the aerolysin family. Self-assembles to first form a non-lytic oligomeric intermediate, and then, a mushroom-shaped homoheptamer structure of 100 Angstroms in length and up to 100 Angstroms in diameter. Interacts with human ADAM10; this interaction is required for toxin pore formation, disruption of focal adhesions, and hly-mediated cytotoxicity.

It localises to the secreted. Functionally, alpha-toxin binds to the membrane of eukaryotic cells (particularly red blood cells, RBC) forming pores, resulting in hemolysis, with the release of low-molecular weight molecules leading to eventual osmotic RBC lysis. Human RBCs bind much less alpha-toxin than do rabbit RBCs. Heptamer oligomerization and pore formation is required for lytic activity. This is Alpha-hemolysin (hly) from Staphylococcus aureus.